The sequence spans 238 residues: Probable transcriptional regulatory protein LACR_0237 (238 aa).

It belongs to the TACO1 family. YeeN subfamily.

It localises to the cytoplasm. This is Probable transcriptional regulatory protein LACR_0237 from Lactococcus lactis subsp. cremoris (strain SK11).